The chain runs to 35 residues: Dolichyl-diphosphooligosaccharide--protein glycosyltransferase subunit 4B (35 aa).

At 1 to 8 the chain is on the lumenal side; it reads MFDDQDLG. A helical membrane pass occupies residues 9 to 29; that stretch reads FFANFLGIFIFIMVIAYHFVV. Topologically, residues 30–35 are cytoplasmic; sequence AEPKFE.

It belongs to the OST4 family. Component of the oligosaccharyltransferase (OST) complex.

The protein localises to the endoplasmic reticulum membrane. Its function is as follows. Subunit of the oligosaccharyl transferase (OST) complex that catalyzes the initial transfer of a defined glycan (Glc(3)Man(9)GlcNAc(2) in eukaryotes) from the lipid carrier dolichol-pyrophosphate to an asparagine residue within an Asn-X-Ser/Thr consensus motif in nascent polypeptide chains, the first step in protein N-glycosylation. N-glycosylation occurs cotranslationally and the complex associates with the Sec61 complex at the channel-forming translocon complex that mediates protein translocation across the endoplasmic reticulum (ER). All subunits are required for a maximal enzyme activity. This Arabidopsis thaliana (Mouse-ear cress) protein is Dolichyl-diphosphooligosaccharide--protein glycosyltransferase subunit 4B (OST4B).